Consider the following 805-residue polypeptide: U-box domain-containing protein 70 (805 aa).

7 TPR repeats span residues 15 to 48, 49 to 82, 90 to 127, 129 to 153, 154 to 187, 189 to 221, and 222 to 255; these read ARRE…DPRD, ISFL…GREL, ARAL…HYSE, TLAK…DQEA, ADHH…NPKD, RVFS…DPTF, and LKGY…DPNN. The interval 136 to 160 is disordered; sequence AEEARKEIEERERLDQEAADHHRDR. Positions 341–417 form a coiled coil; the sequence is RKETEESLSR…VREVEELRQK (77 aa). Positions 445 to 711 constitute a Protein kinase domain; the sequence is FSNSLKIGEG…GEVWAIVEAI (267 aa). ATP-binding positions include 451–459 and Lys472; that span reads IGEGGFGCV. The Proton acceptor role is filled by Asp567. One can recognise a U-box domain in the interval 730 to 804; it reads SPPSYFICPI…QEWLQQHSMS (75 aa).

Belongs to the protein kinase superfamily. Ser/Thr protein kinase family. As to quaternary structure, interacts with MODD.

The catalysed reaction is L-seryl-[protein] + ATP = O-phospho-L-seryl-[protein] + ADP + H(+). The enzyme catalyses L-threonyl-[protein] + ATP = O-phospho-L-threonyl-[protein] + ADP + H(+). It catalyses the reaction S-ubiquitinyl-[E2 ubiquitin-conjugating enzyme]-L-cysteine + [acceptor protein]-L-lysine = [E2 ubiquitin-conjugating enzyme]-L-cysteine + N(6)-ubiquitinyl-[acceptor protein]-L-lysine.. It functions in the pathway protein modification; protein ubiquitination. Functionally, functions as an E3 ubiquitin ligase. Is recruited by MODD to promote ubiquitination of BZIP46, a positive regulator of abscisic acid (ABA) signaling and drought stress tolerance. In Oryza sativa subsp. japonica (Rice), this protein is U-box domain-containing protein 70.